We begin with the raw amino-acid sequence, 817 residues long: Dolichyl-phosphate-mannose--protein mannosyltransferase 1 (817 aa).

The residue at position 2 (serine 2) is an N-acetylserine. The Cytoplasmic segment spans residues serine 2–lysine 50. The chain crosses the membrane as a helical span at residues leucine 51–tryptophan 70. Residues proline 71–valine 135 lie on the Lumenal side of the membrane. A helical membrane pass occupies residues leucine 136 to methionine 154. The Cytoplasmic segment spans residues threonine 155–tyrosine 179. A helical membrane pass occupies residues valine 180–valine 200. The Lumenal segment spans residues tyrosine 201–lysine 234. The chain crosses the membrane as a helical span at residues tryptophan 235–leucine 259. The Cytoplasmic segment spans residues threonine 260–lysine 273. A helical transmembrane segment spans residues leucine 274–isoleucine 291. Over histidine 292 to leucine 584 the chain is Lumenal. 3 MIR domains span residues valine 324 to tyrosine 378, phenylalanine 388 to aspartate 448, and glutamate 459 to asparagine 514. Asparagine 390 and asparagine 513 each carry an N-linked (GlcNAc...) asparagine glycan. The chain crosses the membrane as a helical span at residues glycine 585–isoleucine 605. Over threonine 606–methionine 685 the chain is Cytoplasmic. A helical membrane pass occupies residues glycine 686–glycine 710. The Lumenal segment spans residues threonine 711–glutamate 817. N-linked (GlcNAc...) asparagine glycosylation is present at asparagine 743.

The protein belongs to the glycosyltransferase 39 family. As to quaternary structure, PMT1 and PMT2 form a functional heterodimer. The complex interacts with endoplasmic reticulum proteins EMP24, ERV25, ERP1, ERP2, CDC48, HRD1, USA1, YOS9, ERO1, PDI1, UBR1, Cue4, DFM1 and TED1. Forms also a minor complex with PMT3.

The protein resides in the endoplasmic reticulum membrane. The catalysed reaction is a di-trans,poly-cis-dolichyl beta-D-mannosyl phosphate + L-seryl-[protein] = 3-O-(alpha-D-mannosyl)-L-seryl-[protein] + a di-trans,poly-cis-dolichyl phosphate + H(+). The enzyme catalyses a di-trans,poly-cis-dolichyl beta-D-mannosyl phosphate + L-threonyl-[protein] = 3-O-(alpha-D-mannosyl)-L-threonyl-[protein] + a di-trans,poly-cis-dolichyl phosphate + H(+). Its pathway is protein modification; protein glycosylation. In terms of biological role, protein O-mannosyltransferase involved in O-glycosylation which is essential for cell wall rigidity. Forms a heterodimeric complex with PMT2 and more rarely with PMT3 to transfer mannose from Dol-P-mannose to Ser or Thr residues on proteins. The PMT1-PMT2 complex participates in oxidative protein folding, ER-associated protein degradation (ERAD), as well as ER export. Required for incorporation of proteins in the cell wall. The chain is Dolichyl-phosphate-mannose--protein mannosyltransferase 1 from Saccharomyces cerevisiae (strain ATCC 204508 / S288c) (Baker's yeast).